A 579-amino-acid chain; its full sequence is MFSLRSLVDYLRSQHELIDIHVPVDPHLEIAEIHRRVVEREGPALLFHQVKGSPFPVLTNLFGTRRRVDLLFPDLSSDLFEQIIHLLSSPPSFSSLWKHRSLFKRGISALGMRKRHLRPSPFLYQDAPNLSQLPMLTSWPEDGGPFLTLPLVYTQSPENGVPNLGMYRMQRFDKETLGLHFQIQKGGGAHFFEAEQKKQNLPVTVFLSGNPFLILSAIAPLPENVPELLFCSFLQNKKLSFVEKHPQSGHPLLCDSEFILTGEAVAGERRPEGPFGDHFGYYSLTHDFPIFKCNCLYHKKDAIYPATVVGKPFQEDFFLGNKLQELLSPLFPLIMPGVQDLKSYGEAGFHALAAAIVKERYWKEALRSALRILGEGQLSLTKFLWITDQSVDLENFPSLLECVLERMNFDRDLLILSETANDTLDYTGSGFNKGSKGIFLGVGAPIRSLPRRYRGPSLPGISQIGVFCRGCLVLETSLQQLDIPALLKEPHLADWPLVILVEDLSSALSSTKEFIWRTFTRSSPATDLHIPVSQITNHKVSYTPPMILNALMKPPYPKEVEADEATQNLVSSRWHSYFP.

The protein belongs to the UbiD family.

This is an uncharacterized protein from Chlamydia trachomatis serovar D (strain ATCC VR-885 / DSM 19411 / UW-3/Cx).